The following is an 89-amino-acid chain: Bombyxin B-2 (89 aa).

The signal sequence occupies residues 1-19 (MKTSVMFMLVFVISLMCSS). Intrachain disulfides connect C29-C75, C41-C88, and C74-C79. The propeptide at 48 to 66 (SGAQYAPYFWTRQYLGSRG) is c peptide like.

Belongs to the insulin family. In terms of assembly, heterodimer of a B chain and an A chain linked by two disulfide bonds.

The protein localises to the secreted. Brain peptide responsible for activation of prothoracic glands to produce ecdysone in insects. This is Bombyxin B-2 (BBXB2) from Bombyx mori (Silk moth).